Reading from the N-terminus, the 104-residue chain is Ribonuclease P protein component 4 (104 aa).

The Zn(2+) site is built by C57, C60, C83, and C86.

The protein belongs to the eukaryotic/archaeal RNase P protein component 4 family. Consists of a catalytic RNA component and at least 4-5 protein subunits. Zn(2+) serves as cofactor.

It localises to the cytoplasm. The enzyme catalyses Endonucleolytic cleavage of RNA, removing 5'-extranucleotides from tRNA precursor.. In terms of biological role, part of ribonuclease P, a protein complex that generates mature tRNA molecules by cleaving their 5'-ends. This chain is Ribonuclease P protein component 4, found in Saccharolobus islandicus (strain L.S.2.15 / Lassen #1) (Sulfolobus islandicus).